The following is a 495-amino-acid chain: UDP-N-acetylmuramate--L-alanine ligase (495 aa).

ATP is bound at residue 122 to 128; sequence GTHGKTT.

It belongs to the MurCDEF family.

The protein localises to the cytoplasm. It carries out the reaction UDP-N-acetyl-alpha-D-muramate + L-alanine + ATP = UDP-N-acetyl-alpha-D-muramoyl-L-alanine + ADP + phosphate + H(+). It participates in cell wall biogenesis; peptidoglycan biosynthesis. Cell wall formation. The sequence is that of UDP-N-acetylmuramate--L-alanine ligase from Mycobacterium leprae (strain TN).